The primary structure comprises 292 residues: Phosphoribulokinase 2 (292 aa).

An ATP-binding site is contributed by 12–20 (GSSGAGTST).

It belongs to the phosphoribulokinase family.

The catalysed reaction is D-ribulose 5-phosphate + ATP = D-ribulose 1,5-bisphosphate + ADP + H(+). Its pathway is carbohydrate biosynthesis; Calvin cycle. This chain is Phosphoribulokinase 2 (prkB), found in Cereibacter sphaeroides (Rhodobacter sphaeroides).